The sequence spans 417 residues: Serine hydroxymethyltransferase (417 aa).

(6S)-5,6,7,8-tetrahydrofolate-binding positions include leucine 121 and 125 to 127; that span reads GHL. The residue at position 229 (lysine 229) is an N6-(pyridoxal phosphate)lysine. 355-357 contacts (6S)-5,6,7,8-tetrahydrofolate; that stretch reads SPF.

Belongs to the SHMT family. Homodimer. Pyridoxal 5'-phosphate serves as cofactor.

The protein localises to the cytoplasm. It catalyses the reaction (6R)-5,10-methylene-5,6,7,8-tetrahydrofolate + glycine + H2O = (6S)-5,6,7,8-tetrahydrofolate + L-serine. It functions in the pathway one-carbon metabolism; tetrahydrofolate interconversion. It participates in amino-acid biosynthesis; glycine biosynthesis; glycine from L-serine: step 1/1. Catalyzes the reversible interconversion of serine and glycine with tetrahydrofolate (THF) serving as the one-carbon carrier. This reaction serves as the major source of one-carbon groups required for the biosynthesis of purines, thymidylate, methionine, and other important biomolecules. Also exhibits THF-independent aldolase activity toward beta-hydroxyamino acids, producing glycine and aldehydes, via a retro-aldol mechanism. In Stenotrophomonas maltophilia (strain K279a), this protein is Serine hydroxymethyltransferase.